Here is a 490-residue protein sequence, read N- to C-terminus: 53 kDa membrane antigen A (490 aa).

Positions 1–16 (MKKKLFFALLVLILSS) are cleaved as a signal peptide. Cys17 carries N-palmitoyl cysteine lipidation. A lipid anchor (S-diacylglycerol cysteine) is attached at Cys17.

Its subcellular location is the cell membrane. The protein is 53 kDa membrane antigen A (tdpA) of Treponema denticola.